The sequence spans 539 residues: 2,3-dihydroxybenzoate-AMP ligase (539 aa).

Residue Gly-191 coordinates ATP. Substrate is bound by residues 234–235 and Ser-240; that span reads HN. Gly-307, Val-329, Asp-413, Arg-428, and Lys-519 together coordinate ATP. Residue Lys-519 coordinates substrate.

The protein belongs to the ATP-dependent AMP-binding enzyme family.

Its subcellular location is the cytoplasm. The enzyme catalyses 2,3-dihydroxybenzoate + holo-[ACP] + ATP = 2,3-dihydroxybenzoyl-[ACP] + AMP + diphosphate. Its pathway is siderophore biosynthesis; bacillibactin biosynthesis. Involved in the biosynthesis of the catecholic siderophore bacillibactin. Catalyzes the activation of the carboxylate group of 2,3-dihydroxy-benzoate (DHB), via ATP-dependent PPi exchange reactions, to the acyladenylate. The sequence is that of 2,3-dihydroxybenzoate-AMP ligase from Bacillus subtilis (strain 168).